A 367-amino-acid polypeptide reads, in one-letter code: Cystinosin (367 aa).

The signal sequence occupies residues 1–22 (MIRNWLTIFILFPLKLVEKCES). The Lumenal segment spans residues 23–125 (SVSLTVPPVV…LVIRSSAISI (103 aa)). 3 N-linked (GlcNAc...) (high mannose) asparagine glycosylation sites follow: N36, N41, and N51. Residue N66 is glycosylated (N-linked (GlcNAc...) asparagine). 3 N-linked (GlcNAc...) (high mannose) asparagine glycosylation sites follow: N84, N104, and N107. A PQ-loop 1 domain is found at 123-189 (ISIINQVIGW…LLWVPYIKEQ (67 aa)). The chain crosses the membrane as a helical span at residues 126-150 (INQVIGWIYFVAWSISFYPQVIMNW). At 151–159 (RRKSVIGLS) the chain is on the cytoplasmic side. Residues 160-179 (FDFVALNLTGFVAYSVFNIG) traverse the membrane as a helical segment. Residue N166 coordinates L-cystine. Residues 180–202 (LLWVPYIKEQFLLKYPNGVNPVN) are Lumenal-facing. The helical transmembrane segment at 203 to 225 (SNDVFFSLHAVVLTLIIIVQCCL) threads the bilayer. D205 provides a ligand contact to H(+). Over 226–234 (YERGGQRVS) the chain is Cytoplasmic. Residues 235-257 (WPAIGFLVLAWLFAFVTMIVAAV) form a helical membrane-spanning segment. Residues 258-263 (GVTTWL) are Lumenal-facing. A PQ-loop 2 domain is found at 263 to 328 (LQFLFCFSYI…QSYNNDQWTL (66 aa)). Residues 264-289 (QFLFCFSYIKLAVTLVKYFPQAYMNF) traverse the membrane as a helical segment. Residues K273, K280, and Y281 each contribute to the L-cystine site. At 290-298 (YYKSTEGWS) the chain is on the cytoplasmic side. A helical membrane pass occupies residues 299–308 (IGNVLLDFTG). Residues N301 and D305 each coordinate L-cystine. D305 is a H(+) binding site. At 309 to 331 (GSFSLLQMFLQSYNNDQWTLIFG) the chain is on the lumenal side. Residues 332–354 (DPTKFGLGVFSIVFDVVFFIQHF) traverse the membrane as a helical segment. D346 serves as a coordination point for H(+). The Cytoplasmic portion of the chain corresponds to 355–367 (CLYRKRPGYDQLN). Residues 362 to 366 (GYDQL) carry the Lysosomal targeting motif motif.

This sequence belongs to the cystinosin family. In terms of assembly, interacts with components of the V-ATPase complex. Interacts with components of the Ragulator complex. Interacts with RRAGA/RagA and RRAGC/RagC. Interacts with AP-3 complex subunit mu (AP3M1 or AP3M2). In terms of tissue distribution, strongly expressed in pancreas, kidney (adult and fetal), skeletal muscle, melanocytes and keratinocytes. Expressed at lower levels in placenta and heart. Weakly expressed in lung, liver and brain (adult and fetal). As to expression, represents 5-20 % of CTNS transcripts, with the exception of the testis that expresses both isoforms in equal proportions.

It is found in the lysosome membrane. Its subcellular location is the melanosome membrane. The protein localises to the cell membrane. It catalyses the reaction L-cystine(out) + H(+)(out) = L-cystine(in) + H(+)(in). With respect to regulation, switches between a lumen- and a cytosol-open conformation: pH induces conformational changes and shifts the equilibrium to facilitate the transition between the lumen- and cytosol-open conformation, thereby promoting cystine transport. Protonation of specific aspartate residues (Asp-205, Asp-305 and Asp-346) favors the cytosol-open conformation. In terms of biological role, cystine/H(+) symporter that mediates export of cystine, the oxidized dimer of cysteine, from lysosomes. Plays an important role in melanin synthesis by catalyzing cystine export from melanosomes, possibly by inhibiting pheomelanin synthesis. In addition to cystine export, also acts as a positive regulator of mTORC1 signaling in kidney proximal tubular cells, via interactions with components of the v-ATPase and Ragulator complexes. Also involved in small GTPase-regulated vesicle trafficking and lysosomal localization of LAMP2A, independently of cystine transporter activity. The sequence is that of Cystinosin from Homo sapiens (Human).